An 807-amino-acid chain; its full sequence is Poly-beta-1,6-N-acetyl-D-glucosamine export protein (807 aa).

The signal sequence occupies residues 1–26 (MYSSSRKRCPKTKWALKLLTAAFLAA). 3 TPR repeats span residues 98–131 (ARGYAAVAVAYRNLQQWQNSLTLWQKALSLEPQN), 165–198 (KANLLAEAYIYKLAGRHQDELRAMTESLPENAST), and 279–311 (RIQVDHLGALLTRDRYKDVISHYQRLKKTGQII).

The protein resides in the cell outer membrane. In terms of biological role, exports the biofilm adhesin polysaccharide poly-beta-1,6-N-acetyl-D-glucosamine (PGA) across the outer membrane. The PGA transported seems to be partially N-deacetylated since N-deacetylation of PGA by PgaB is needed for PGA export through the PgaA porin. The chain is Poly-beta-1,6-N-acetyl-D-glucosamine export protein (pgaA) from Escherichia coli O157:H7.